The sequence spans 466 residues: tRNA modification GTPase MnmE (466 aa).

(6S)-5-formyl-5,6,7,8-tetrahydrofolate is bound by residues R23, E86, and K125. The region spanning 221–388 is the TrmE-type G domain; sequence GIPVAIVGEP…LKNELLSFVN (168 aa). Residue N231 coordinates K(+). GTP is bound by residues 231 to 236, 250 to 256, and 275 to 278; these read NVGKST, SDIAGTT, and DTAG. S235 is a Mg(2+) binding site. 3 residues coordinate K(+): S250, I252, and T255. T256 serves as a coordination point for Mg(2+). K466 contacts (6S)-5-formyl-5,6,7,8-tetrahydrofolate.

The protein belongs to the TRAFAC class TrmE-Era-EngA-EngB-Septin-like GTPase superfamily. TrmE GTPase family. As to quaternary structure, homodimer. Heterotetramer of two MnmE and two MnmG subunits. Requires K(+) as cofactor.

It is found in the cytoplasm. Its function is as follows. Exhibits a very high intrinsic GTPase hydrolysis rate. Involved in the addition of a carboxymethylaminomethyl (cmnm) group at the wobble position (U34) of certain tRNAs, forming tRNA-cmnm(5)s(2)U34. The polypeptide is tRNA modification GTPase MnmE (Flavobacterium johnsoniae (strain ATCC 17061 / DSM 2064 / JCM 8514 / BCRC 14874 / CCUG 350202 / NBRC 14942 / NCIMB 11054 / UW101) (Cytophaga johnsonae)).